A 202-amino-acid chain; its full sequence is ER membrane protein complex subunit 7 homolog (202 aa).

Residues 1–23 (MAPIFRSTSLIAFSLFFFFFAST) form the signal peptide. The helical transmembrane segment at 148–168 (IVKSPMGLMVGFMVVVVFLMP) threads the bilayer. The tract at residues 179–202 (MKSAQEQMRSQGVPSLTSLLPASR) is disordered. Residues 182-202 (AQEQMRSQGVPSLTSLLPASR) are compositionally biased toward polar residues.

This sequence belongs to the EMC7 family.

It localises to the membrane. The chain is ER membrane protein complex subunit 7 homolog from Arabidopsis thaliana (Mouse-ear cress).